The primary structure comprises 165 residues: MALNLQGKQAIVAEVKEVAKGALSAVVADSRGVTVDKMTELRRAGREAGVHMQVVRNTLLRRIVEGTPFECLKDTFVGPTLIAFSAEHPGAAARLFKAFAKDNAKFEVKAAAFEGELIPAAQIDRLATLPTYEEAIARLMGTMKEAAAGKLVRTLAALRDQKEAA.

Belongs to the universal ribosomal protein uL10 family. As to quaternary structure, part of the ribosomal stalk of the 50S ribosomal subunit. The N-terminus interacts with L11 and the large rRNA to form the base of the stalk. The C-terminus forms an elongated spine to which L12 dimers bind in a sequential fashion forming a multimeric L10(L12)X complex.

Forms part of the ribosomal stalk, playing a central role in the interaction of the ribosome with GTP-bound translation factors. This is Large ribosomal subunit protein uL10 from Yersinia pseudotuberculosis serotype IB (strain PB1/+).